Consider the following 226-residue polypeptide: MNLKQMVGIEAAKYVEDGMIVGLGTGSTAKFMVDEIGRRVKEEGLSIVGVTTSKETEKQALALGIPLKSIDEVPYVDLTIDGADEISADFQGIKGGGAALLFEKIVATYSKKCIWIVDKSKMVDDLGAFPLPVEVVPYGSRQLVHLFEEKGYHPTLRLNAAGETLITDGGHHIIDLHLEKITDPEALGSYLDNLVGVVEHGLFLNMVSMVIVGYEDGPKTLHVPAR.

Residues 25–28 (TGST), 81–84 (DGAD), and 94–97 (KGGG) contribute to the substrate site. Glu103 acts as the Proton acceptor in catalysis. Lys121 is a binding site for substrate.

It belongs to the ribose 5-phosphate isomerase family. Homodimer.

It catalyses the reaction aldehydo-D-ribose 5-phosphate = D-ribulose 5-phosphate. Its pathway is carbohydrate degradation; pentose phosphate pathway; D-ribose 5-phosphate from D-ribulose 5-phosphate (non-oxidative stage): step 1/1. Functionally, catalyzes the reversible conversion of ribose-5-phosphate to ribulose 5-phosphate. This Enterococcus faecalis (strain ATCC 700802 / V583) protein is Ribose-5-phosphate isomerase A.